We begin with the raw amino-acid sequence, 621 residues long: KIF-binding protein (621 aa).

A Phosphoserine modification is found at S178.

This sequence belongs to the KIF-binding protein family. Interacts with KIF1B; positively regulates KIF1B microtubule motor activity. Interacts with STMN2.

Its subcellular location is the cytoplasm. The protein localises to the cytoskeleton. Its function is as follows. Activator of KIF1B plus-end-directed microtubule motor activity. Required for organization of axonal microtubules, and axonal outgrowth and maintenance during peripheral and central nervous system development. The polypeptide is KIF-binding protein (KIFBP) (Bos taurus (Bovine)).